Reading from the N-terminus, the 428-residue chain is Putative aminotransferase MSMEG_6286/MSMEI_6121 (428 aa).

G37 provides a ligand contact to substrate. Residues Y72, 102–105, N191, 222–225, and 256–258 contribute to the pyridoxal 5'-phosphate site; these read ASLE, AYAV, and STS. K339 participates in a covalent cross-link: Isoglutamyl lysine isopeptide (Lys-Gln) (interchain with Q-Cter in protein Pup).

This sequence belongs to the class-I pyridoxal-phosphate-dependent aminotransferase family. The cofactor is pyridoxal 5'-phosphate.

This chain is Putative aminotransferase MSMEG_6286/MSMEI_6121, found in Mycolicibacterium smegmatis (strain ATCC 700084 / mc(2)155) (Mycobacterium smegmatis).